The primary structure comprises 250 residues: Type III pantothenate kinase (250 aa).

6 to 13 provides a ligand contact to ATP; that stretch reads DVGNTNTV. A substrate-binding site is contributed by 103-106; that stretch reads GADR. The active-site Proton acceptor is aspartate 105. Residue aspartate 125 coordinates K(+). Residue threonine 128 participates in ATP binding. Threonine 180 contacts substrate.

The protein belongs to the type III pantothenate kinase family. Homodimer. NH4(+) is required as a cofactor. Requires K(+) as cofactor.

Its subcellular location is the cytoplasm. It catalyses the reaction (R)-pantothenate + ATP = (R)-4'-phosphopantothenate + ADP + H(+). It functions in the pathway cofactor biosynthesis; coenzyme A biosynthesis; CoA from (R)-pantothenate: step 1/5. Functionally, catalyzes the phosphorylation of pantothenate (Pan), the first step in CoA biosynthesis. This chain is Type III pantothenate kinase, found in Frankia alni (strain DSM 45986 / CECT 9034 / ACN14a).